The chain runs to 108 residues: DNA-binding protein HBbu (108 aa).

The protein belongs to the bacterial histone-like protein family.

In terms of biological role, histone-like DNA-binding protein which is capable of wrapping DNA to stabilize it, and thus to prevent its denaturation under extreme environmental conditions. This is DNA-binding protein HBbu (hbb) from Borrelia andersonii (Borreliella andersonii).